The sequence spans 561 residues: Putative transport protein YbjL (561 aa).

A run of 5 helical transmembrane segments spans residues 8–28 (LLNG…LCLG), 32–52 (LGSI…LLGQ), 66–86 (FMLF…SIFF), 94–114 (MLAL…GKLF), and 158–178 (NLSL…IVGA). RCK C-terminal domains lie at 200 to 288 (RGLD…SFRN) and 292 to 373 (VFDR…RIGF). The next 5 membrane-spanning stretches (helical) occupy residues 383-403 (LLAF…TFQF), 406-426 (FSFG…LGFM), 451-471 (VFMA…LGAI), 475-495 (MLIA…LFGA), and 540-560 (AIAN…WPGL).

This sequence belongs to the AAE transporter (TC 2.A.81) family. YbjL subfamily.

Its subcellular location is the cell membrane. This Escherichia coli O127:H6 (strain E2348/69 / EPEC) protein is Putative transport protein YbjL.